The following is a 238-amino-acid chain: Ion-translocating oxidoreductase complex subunit E (238 aa).

The next 5 helical transmembrane spans lie at 41–61, 71–91, 95–115, 130–150, and 184–204; these read LGLG…VSLV, LPAF…LMQA, ELYQ…VILG, SFDG…LGGL, and GFLL…LIAL.

It belongs to the NqrDE/RnfAE family. As to quaternary structure, the complex is composed of six subunits: RnfA, RnfB, RnfC, RnfD, RnfE and RnfG.

The protein localises to the cell inner membrane. Its function is as follows. Part of a membrane-bound complex that couples electron transfer with translocation of ions across the membrane. The protein is Ion-translocating oxidoreductase complex subunit E of Pseudomonas aeruginosa (strain LESB58).